Consider the following 152-residue polypeptide: Endoribonuclease YbeY (152 aa).

H113, H117, and H123 together coordinate Zn(2+).

The protein belongs to the endoribonuclease YbeY family. Zn(2+) serves as cofactor.

The protein localises to the cytoplasm. Single strand-specific metallo-endoribonuclease involved in late-stage 70S ribosome quality control and in maturation of the 3' terminus of the 16S rRNA. This is Endoribonuclease YbeY from Janthinobacterium sp. (strain Marseille) (Minibacterium massiliensis).